Reading from the N-terminus, the 20-residue chain is KDGYLVGSDGCKYSCLTRPG.

The LCN-type CS-alpha/beta domain maps to 1 to 20 (KDGYLVGSDGCKYSCLTRPG).

In terms of tissue distribution, expressed by the venom gland.

It localises to the secreted. In terms of biological role, beta toxins bind voltage-independently at site-4 of sodium channels (Nav) and shift the voltage of activation toward more negative potentials thereby affecting sodium channel activation and promoting spontaneous and repetitive firing. This chain is Putative beta-neurotoxin, found in Tityus pachyurus (Colombian scorpion).